Consider the following 1375-residue polypeptide: Mediator of RNA polymerase II transcription subunit 13 (1375 aa).

A disordered region spans residues 1–51; sequence MKASEMARPPMRPGNPHAFASPATTPSRTASPNNAQGANVRTTQGGNQAGA. Over residues 22-51 the composition is skewed to polar residues; sequence PATTPSRTASPNNAQGANVRTTQGGNQAGA. 2 coiled-coil regions span residues 182–216 and 297–324; these read ADDSNRRTSKKKAKMDSLEQNIEKWRMSVQRWLSR and QLERDKILDMQRKAKKAEEDAMRRKDEA. Residues 313–324 show a composition bias toward basic and acidic residues; the sequence is AEEDAMRRKDEA. Disordered stretches follow at residues 313-333, 350-370, 397-417, 537-581, 660-689, 841-862, and 1233-1285; these read AEEDAMRRKDEAPGLYPSSPF, YPTPPDGIVPGTGISSTDTPS, YTTTDNQQHASTSPTFPAPLE, ATSP…PASL, RAVSDDSASDSESETSDMSEGSPEDPVDTH, QAKGQQRPPPRKPNESNAIPSN, and TPTT…AADP. A compositionally biased stretch (polar residues) spans 397 to 411; it reads YTTTDNQQHASTSPT. Positions 666 to 685 are enriched in acidic residues; it reads SASDSESETSDMSEGSPEDP. The segment covering 1233-1259 has biased composition (polar residues); that stretch reads TPTTPAPSNSSAQANTNTPGSTPQTGV.

The protein belongs to the Mediator complex subunit 13 family. In terms of assembly, component of the SRB8-11 complex, which itself associates with the Mediator complex.

The protein resides in the nucleus. Its function is as follows. Component of the SRB8-11 complex. The SRB8-11 complex is a regulatory module of the Mediator complex which is itself involved in regulation of basal and activated RNA polymerase II-dependent transcription. The SRB8-11 complex may be involved in the transcriptional repression of a subset of genes regulated by Mediator. It may inhibit the association of the Mediator complex with RNA polymerase II to form the holoenzyme complex. This chain is Mediator of RNA polymerase II transcription subunit 13 (SSN2), found in Phaeosphaeria nodorum (strain SN15 / ATCC MYA-4574 / FGSC 10173) (Glume blotch fungus).